Reading from the N-terminus, the 249-residue chain is MQSRVVSSAVMFLGGIAGAVKSLPAFVTSSFGAIVDPEDGRGSAAFAEITALTALHHMQRLMMADEMGRSILKERPQVTDETLEFAKTQPEGTFGYRYAAFMKRNNFLPSGRAPILHVSDPTLAYVMLRYRQIHDFVHAYVGLGRTIEEELAVKLFEWQHTGLPVGLMAVLGGMPWLRMDQILNMGMYNEWARANAPRQLHGKRFVSCILNVPWEWYLDKPYEQLVDDVGIVPLDAFLKERKSGGLHDS.

Positions 134, 135, 138, and 150 each coordinate Zn(2+).

It belongs to the COQ4 family. In terms of assembly, component of a multi-subunit COQ enzyme complex. Zn(2+) is required as a cofactor.

The protein resides in the mitochondrion inner membrane. The enzyme catalyses a 4-hydroxy-3-methoxy-5-(all-trans-polyprenyl)benzoate + H(+) = a 2-methoxy-6-(all-trans-polyprenyl)phenol + CO2. Its pathway is cofactor biosynthesis; ubiquinone biosynthesis. In terms of biological role, lyase that catalyzes the C1-decarboxylation of 4-hydroxy-3-methoxy-5-(all-trans-polyprenyl)benzoic acid into 2-methoxy-6-(all-trans-polyprenyl)phenol during ubiquinone biosynthesis. This Trypanosoma brucei brucei (strain 927/4 GUTat10.1) protein is Ubiquinone biosynthesis protein COQ4 homolog, mitochondrial.